The primary structure comprises 685 residues: E3 ubiquitin ligase Rnf157 (685 aa).

Residue Gly-2 is the site of N-myristoyl glycine attachment. The segment at Glu-276–Cys-315 adopts an RING-type zinc-finger fold. The D-box 1 motif lies at Arg-329 to Leu-332. Disordered stretches follow at residues Ser-339–Pro-361, Leu-433–Gln-584, and Leu-650–Ala-672. Positions Ser-434–Val-443 are enriched in low complexity. The segment covering Glu-478 to Gly-537 has biased composition (polar residues). The segment covering Pro-552 to Pro-561 has biased composition (low complexity). Positions Ala-657 to Arg-660 match the D-box 2 motif.

Interacts with APBB1. Interacts with CHD1; CHD1-binding controls RNF157 stability. Also interacts with ATRN, MEGF8, TECR, MSI2, PLRG1, BYSL, MTERF3, PSMA1, MRPS18B, PRPF4, FASTKD2, SLC25A1, SMU1, CNOT9, MRPS2, MAGT1, FXR2, EMD, PSMD8, HDAC1, RAN, HSD17B12, TXNDC5 and MRPL19.

The protein localises to the cytoplasm. It carries out the reaction S-ubiquitinyl-[E2 ubiquitin-conjugating enzyme]-L-cysteine + [acceptor protein]-L-lysine = [E2 ubiquitin-conjugating enzyme]-L-cysteine + N(6)-ubiquitinyl-[acceptor protein]-L-lysine.. E3 ubiquitin ligase that ubiquitinates APBB1 for its degradation by the proteasome and thus prevents apoptosis and promotes survival of neurons. Has a dual role in neurons as it is also required for dendrite growth and maintenance for which its ligase activity is not critical. May act as a scaffold molecule to regulate this process. Acts as a downstream effector of the interconnected PI3K and MAPK signaling pathways and thus participates in the regulation of the cell cycle. This Mus musculus (Mouse) protein is E3 ubiquitin ligase Rnf157 (Rnf157).